The chain runs to 353 residues: Protein arginine N-methyltransferase 1 (353 aa).

The region spanning 32–353 (KDYYFDSYAH…LSCSTDYRMR (322 aa)) is the SAM-dependent MTase PRMT-type domain. Residues His-45, Arg-54, Gly-78, and Glu-100 each contribute to the S-adenosyl-L-methionine site. N6-succinyllysine is present on Lys-116. Lys-127 participates in a covalent cross-link: Glycyl lysine isopeptide (Lys-Gly) (interchain with G-Cter in ubiquitin). Residue Glu-129 coordinates S-adenosyl-L-methionine. Residues Glu-144 and Glu-153 contribute to the active site. N6-acetyllysine occurs at positions 210 and 215. Residues Ser-286 and Ser-289 each carry the phosphoserine modification.

This sequence belongs to the class I-like SAM-binding methyltransferase superfamily. Protein arginine N-methyltransferase family. Homodimer and heterodimer with PRMT8. Homooctamer; individual homodimers associates to form a homooctamer. Interacts with NFATC2IP. Interacts with ILF3 and SUPT5H. Individual homodimers can associate to form a homohexamer. Interacts with FOXO1; the interaction methylates FOXO1, retaining it in the nucleus and increasing its transcriptional activity. Methylation of FOXO1 is increased with oxidative stress. Interacts with CHTOP; the interaction methylates CHTOP, enabling its interaction with the 5FMC complex. Interacts with BTG1, BTG2 and IFNAR1. Interacts with and probably methylates ATXN2L. Component of the methylosome, a 20S complex containing at least CLNS1A/pICln, PRMT5/SKB1, WDR77/MEP50, PRMT1 and ERH. Interacts with DHX9 (via RGG region). Interacts (via N-terminus) with HABP4. Interacts with MAP3K5/ASK1; the interaction results in MAP3K5 methylation by PRMT1 which inhibits MAP3K5 activation. Interacts with TRIM48; the interaction results in ubiquitination of PRMT1 by TRIM48, leading to PRMT1 proteasomal degradation and activation of MAP3K5. Interacts with GATOR1 complex; this interaction is S-adenosyl-L-methionine (SAM) dependent and is perturbated by SAMTOR in a SAM-sensitive manner. Interacts with GFI1; promoting recognition and binding of MRE11 and TP53BP1 substrates by PRMT1. In terms of processing, polyubiquitinated at Lys-127 by the SCF(FBXL17) complex, leading to its subsequent degradation. Ubiquitination is regulated by acetylation at Lys-210 and Lys-215. Polyubiquitinated by E3 ubiquitin-protein ligase TRIM48, leading to suppression of MAP3K5/ASK1 methylation and subsequent MAP3K5 activation. Post-translationally, acetylation at Lys-210 and Lys-215 regulates ubiquitination by the SCF(FBXL17) complex. Acetylated at Lys-215 by p300/EP300. Deacetylated at Lys-210 and Lys-215 by SIRT1. Ubiquitous.

The protein resides in the nucleus. The protein localises to the nucleoplasm. It is found in the cytoplasm. Its subcellular location is the cytosol. It localises to the lysosome membrane. It catalyses the reaction L-arginyl-[protein] + 2 S-adenosyl-L-methionine = N(omega),N(omega)-dimethyl-L-arginyl-[protein] + 2 S-adenosyl-L-homocysteine + 2 H(+). It carries out the reaction L-arginyl-[protein] + S-adenosyl-L-methionine = N(omega)-methyl-L-arginyl-[protein] + S-adenosyl-L-homocysteine + H(+). The catalysed reaction is N(omega)-methyl-L-arginyl-[protein] + S-adenosyl-L-methionine = N(omega),N(omega)-dimethyl-L-arginyl-[protein] + S-adenosyl-L-homocysteine + H(+). Its function is as follows. Arginine methyltransferase that methylates (mono and asymmetric dimethylation) the guanidino nitrogens of arginyl residues present in proteins such as ESR1, histone H2, H3 and H4, FMR1, ILF3, HNRNPA1, HNRNPD, NFATC2IP, SUPT5H, TAF15, EWS, HABP4, SERBP1, RBM15, FOXO1, CHTOP, MAP3K5/ASK1 and MICU1. Constitutes the main enzyme that mediates monomethylation and asymmetric dimethylation of histone H4 'Arg-3' (H4R3me1 and H4R3me2a, respectively), a specific tag for epigenetic transcriptional activation. May be involved in the regulation of TAF15 transcriptional activity, act as an activator of estrogen receptor (ER)-mediated transactivation, play a key role in neurite outgrowth and act as a negative regulator of megakaryocytic differentiation, by modulating p38 MAPK pathway. Methylates RBM15, promoting ubiquitination and degradation of RBM15. Methylates MRE11 and TP53BP1, promoting the DNA damage response. Methylates FOXO1 and retains it in the nucleus increasing its transcriptional activity. Methylates CHTOP and this methylation is critical for its 5-hydroxymethylcytosine (5hmC)-binding activity. Methylates MAP3K5/ASK1 at 'Arg-85' and 'Arg-87' which promotes association of MAP3K5 with thioredoxin and negatively regulates MAP3K5 association with TRAF2, inhibiting MAP3K5 stimulation and MAP3K5-induced activation of JNK. Methylates H4R3 in genes involved in glioblastomagenesis in a CHTOP- and/or TET1-dependent manner. Plays a role in regulating alternative splicing in the heart. Methylates NPRL2 at 'Arg-78' leading to inhibition of its GTPase activator activity and then the GATOR1 complex and consequently inducing timely mTORC1 activation under methionine-sufficient conditions. The sequence is that of Protein arginine N-methyltransferase 1 from Rattus norvegicus (Rat).